The primary structure comprises 176 residues: Sigma intracellular receptor 2 (176 aa).

Topologically, residues 1-9 (MGAPATRRC) are cytoplasmic. A helical transmembrane segment spans residues 10–30 (VEWLLGLYFLSHIPITLFMDL). The region spanning 10 to 158 (VEWLLGLYFL…PYLLIPFILL (149 aa)) is the EXPERA domain. Residues 31–68 (QAVLPRELYPVEFRNLLKWYAKEFKDPLLQEPPAWFKS) lie on the Lumenal side of the membrane. The helical transmembrane segment at 69-89 (FLFCELVFQLPFFPIATYAFL) threads the bilayer. Cholesterol contacts are provided by Val75 and Gln77. At 90–99 (KGSCKWIRTP) the chain is on the cytoplasmic side. The helical transmembrane segment at 100–120 (AIIYSVHTMTTLIPILSTFLF) threads the bilayer. A required for interaction with Hst1/HTN1 region spans residues 108-176 (MTTLIPILST…YKYEEKRKKK (69 aa)). At 121–140 (EDFSKASGFKGQRPETLHER) the chain is on the lumenal side. A helical transmembrane segment spans residues 141-161 (LTLVSVYAPYLLIPFILLIFM). The Cytoplasmic segment spans residues 162-176 (LRSPYYKYEEKRKKK). Positions 172 to 176 (KRKKK) match the ER retention motif motif.

Belongs to the TMEM97/sigma-2 receptor family. Homodimer. Interacts with NPC1; the interaction impairs NPC1-mediated cholesterol transport. Interacts with PGRMC1 and LDLR; the interaction increases LDL internalization. Interacts with histatin 1/HTN1; the interaction induces HTN1-stimulating wound healing. Interacts with TSPO. Forms a complex with TSPO and PGRMC1; the interaction occurs in MIA PaCa-2 cells but not in MCF7 cells. As to expression, widely expressed in normal tissues. Expressed in pancreatic, renal, breast, colon, ovarian surface epithelial (OSE) cells. Highly expressed in various proliferating cancer cells.

The protein localises to the rough endoplasmic reticulum membrane. Its subcellular location is the nucleus membrane. Sigma-2 receptor which contributes to ameliorate dysfunctional cellular processes and slow degenerative progression by regulating cell functions including cholesterol biosynthesis/trafficking, membrane trafficking, autophagy, lipid membrane-bound protein trafficking, and receptor stabilization at the cell surface. Forms a ternary complex with PGRMC1 receptor and low density lipoprotein receptor/LDLR at the plasma membrane, which increases LDLR-mediated LDL cholesterol internalization. Decreases lysosomal sterol transporter NPC1 availability to the cell, probably through NPC1-binding, hence controlling lipid transport, including cholesterol and LBPA, outside of late endosome/lysosome. Binds regio- and stereoselective ligand 20(S)-hydroxycholesterol (20(S)-OHC) which enhances TMEM97-NPC1 interaction and decreases TMEM97-PGRMC1 and TMEM97-TSPO interactions, thereby linking OHC binding to cholesterol homeostasis. Also able to bind cholesterol. Binds histatin 1 (Hst 1)/HN1 salivary peptide at the ER membrane, which is critical for increasing mitochondria-ER contacts and stimulating Hst1 wound healing properties. May alter the activity of some cytochrome P450 proteins. Although shows homologies with sterol isomerases (EXPERA domain), not able to catalyze sterol isomerization. However, may act as sensors of these molecules. Acts as a quality control factor in the ER, promoting the proteolytic degradation of nonproductive and extramitochondrial precursor proteins in the ER membrane thus removing them from the ER surface. The polypeptide is Sigma intracellular receptor 2 (Homo sapiens (Human)).